We begin with the raw amino-acid sequence, 103 residues long: Large ribosomal subunit protein uL24 (103 aa).

Belongs to the universal ribosomal protein uL24 family. As to quaternary structure, part of the 50S ribosomal subunit.

Functionally, one of two assembly initiator proteins, it binds directly to the 5'-end of the 23S rRNA, where it nucleates assembly of the 50S subunit. One of the proteins that surrounds the polypeptide exit tunnel on the outside of the subunit. The sequence is that of Large ribosomal subunit protein uL24 from Listeria monocytogenes serotype 4a (strain HCC23).